The sequence spans 245 residues: MIIPALDLIDGTVVRLHQGDYGKQRDYGNDPLPRLQDYATQGAEVLHLVDLTGAKDPAKRQIPLIKTLVAGVNVPVQVGGGVRSEEDVAALLEAGVARVVVGSTAVKSPEMVKGWFERFGADALVLALDVRIDEQGNKQVAVSGWQENSGVSLEQLVETYLPIGLKHVLCTDISRDGTLAGSNVSLYEEVCARYPQVAFQSSGGIGDINDVAALRGTGVRGVIVGRALLEGKFTVKEAIACWQNA.

D7 serves as the catalytic Proton acceptor. Residue D129 is the Proton donor of the active site.

The protein belongs to the HisA/HisF family.

The protein localises to the cytoplasm. The enzyme catalyses 1-(5-phospho-beta-D-ribosyl)-5-[(5-phospho-beta-D-ribosylamino)methylideneamino]imidazole-4-carboxamide = 5-[(5-phospho-1-deoxy-D-ribulos-1-ylimino)methylamino]-1-(5-phospho-beta-D-ribosyl)imidazole-4-carboxamide. The protein operates within amino-acid biosynthesis; L-histidine biosynthesis; L-histidine from 5-phospho-alpha-D-ribose 1-diphosphate: step 4/9. This is 1-(5-phosphoribosyl)-5-[(5-phosphoribosylamino)methylideneamino] imidazole-4-carboxamide isomerase from Shigella boydii serotype 4 (strain Sb227).